A 236-amino-acid polypeptide reads, in one-letter code: MPKVAKKKVAARAVVDRARKYTLQEACALVKQAAPAKFDETVDLAVRLGVNPRHADQMVRGAVVLPHGTGQSLRVLVFAKGEKAKEAEAAGADFVGEADLVNKVQEGFMDFDRVIATPDMMGLVGKLGRILGPRGLMPNPKVGTVTFDVKTAVSEAKAGKVEYRVEKAGIVHARIGKVSFAENALHVNADALIQALVRAKPATAKGIYLRSITMSSTMGPGVRIDPVHFIGKTEEA.

This sequence belongs to the universal ribosomal protein uL1 family. In terms of assembly, part of the 50S ribosomal subunit.

Functionally, binds directly to 23S rRNA. The L1 stalk is quite mobile in the ribosome, and is involved in E site tRNA release. In terms of biological role, protein L1 is also a translational repressor protein, it controls the translation of the L11 operon by binding to its mRNA. The protein is Large ribosomal subunit protein uL1 of Sorangium cellulosum (strain So ce56) (Polyangium cellulosum (strain So ce56)).